The chain runs to 122 residues: Small ribosomal subunit protein uS13 (122 aa).

Residues 98–122 form a disordered region; that stretch reads VRGQRTKTNARTRKGKRKTVGAKAK.

This sequence belongs to the universal ribosomal protein uS13 family. As to quaternary structure, part of the 30S ribosomal subunit. Forms a loose heterodimer with protein S19. Forms two bridges to the 50S subunit in the 70S ribosome.

Its function is as follows. Located at the top of the head of the 30S subunit, it contacts several helices of the 16S rRNA. In the 70S ribosome it contacts the 23S rRNA (bridge B1a) and protein L5 of the 50S subunit (bridge B1b), connecting the 2 subunits; these bridges are implicated in subunit movement. Contacts the tRNAs in the A and P-sites. The sequence is that of Small ribosomal subunit protein uS13 from Nautilia profundicola (strain ATCC BAA-1463 / DSM 18972 / AmH).